Reading from the N-terminus, the 416-residue chain is Orexin/Hypocretin receptor type 1 (416 aa).

The interval 1-22 (MEPSATPGAQPGVPTSSGEPFH) is disordered. Topologically, residues 1-46 (MEPSATPGAQPGVPTSSGEPFHLPPDYEDEFLRYLWRDYLYPKQYE) are extracellular. The required for response to orexin-A stretch occupies residues 26 to 41 (DYEDEFLRYLWRDYLY). Residues 47–67 (WVLIAAYVAVFLIALVGNTLV) form a helical membrane-spanning segment. Residues 68–82 (CLAVWRNHHMRTVTN) are Cytoplasmic-facing. Residues 83–105 (YFIVNLSLADVLVTAICLPASLL) form a helical membrane-spanning segment. The Extracellular segment spans residues 106 to 119 (VDITESWLFGQALC). An intrachain disulfide couples cysteine 119 to cysteine 202. Residues 120–140 (KVIPYLQAVSVSVAVLTLSFI) form a helical membrane-spanning segment. Topologically, residues 141 to 160 (ALDRWYAICHPLLFKSTARR) are cytoplasmic. Residues 161–182 (ARGSILGIWAVSLAVMVPQAAV) form a helical membrane-spanning segment. Topologically, residues 183–213 (MECSSVLPELANRTRLFSVCDEHWADELYPK) are extracellular. N-linked (GlcNAc...) asparagine glycosylation is present at asparagine 194. Residues 214–235 (IYHSCFFIVTYLAPLGLMAMAY) form a helical membrane-spanning segment. Over 236-298 (FQIFRKLWGR…QMRARRKTAK (63 aa)) the chain is Cytoplasmic. A helical transmembrane segment spans residues 299-321 (MLMVVLLVFALCYLPISVLNVLK). At 322–336 (RVFGMFRQASDREAV) the chain is on the extracellular side. Residues 337-360 (YACFTFSHWLVYANSAANPIIYNF) traverse the membrane as a helical segment. At 361 to 416 (LSGKFREQFKAAFSCCLPGLGPGSSARHKSLSLQSRCSVSKVSEHVVLTTVTTVLS) the chain is on the cytoplasmic side.

This sequence belongs to the G-protein coupled receptor 1 family. Widely expressed.

Its subcellular location is the cell membrane. In terms of biological role, moderately selective excitatory receptor for orexin-A and, with a lower affinity, for orexin-B neuropeptide. Triggers an increase in cytoplasmic Ca(2+) levels in response to orexin-A binding. The protein is Orexin/Hypocretin receptor type 1 of Mus musculus (Mouse).